The primary structure comprises 192 residues: Recombination protein RecR (192 aa).

The C4-type zinc finger occupies 51 to 66; the sequence is CQTCFHLSADPECEIC. The Toprim domain maps to 74–168; it reads GLICVVADSR…PVSRIAYGLP (95 aa).

This sequence belongs to the RecR family.

May play a role in DNA repair. It seems to be involved in an RecBC-independent recombinational process of DNA repair. It may act with RecF and RecO. This Parasynechococcus marenigrum (strain WH8102) protein is Recombination protein RecR.